The sequence spans 159 residues: uncharacterized protein (159 aa).

One can recognise an N-acetyltransferase domain in the interval 7–151; sequence LLINYKTLEE…NPLVWHPASE (145 aa).

This is an uncharacterized protein from Bacillus licheniformis (strain ATCC 14580 / DSM 13 / JCM 2505 / CCUG 7422 / NBRC 12200 / NCIMB 9375 / NCTC 10341 / NRRL NRS-1264 / Gibson 46).